The following is a 383-amino-acid chain: Acetylornithine deacetylase (383 aa).

Residue His80 participates in Zn(2+) binding. Residue Asp82 is part of the active site. Asp112 is a binding site for Zn(2+). Glu144 is an active-site residue. Positions 145, 169, and 355 each coordinate Zn(2+).

Belongs to the peptidase M20A family. ArgE subfamily. In terms of assembly, homodimer. Zn(2+) serves as cofactor. Requires Co(2+) as cofactor. It depends on glutathione as a cofactor.

It is found in the cytoplasm. The enzyme catalyses N(2)-acetyl-L-ornithine + H2O = L-ornithine + acetate. Its pathway is amino-acid biosynthesis; L-arginine biosynthesis; L-ornithine from N(2)-acetyl-L-ornithine (linear): step 1/1. In terms of biological role, catalyzes the hydrolysis of the amide bond of N(2)-acetylated L-amino acids. Cleaves the acetyl group from N-acetyl-L-ornithine to form L-ornithine, an intermediate in L-arginine biosynthesis pathway, and a branchpoint in the synthesis of polyamines. This chain is Acetylornithine deacetylase, found in Salmonella heidelberg (strain SL476).